The chain runs to 277 residues: Outer kinetochore KNL1 complex subunit ZWINT (277 aa).

Residues 80-155 (ASEDTSRQKA…MEKRRAVQNQ (76 aa)) are interaction with NDC80 and ZW10. Residues 104 to 217 (REHVEAIKIG…RYQTFLQLLY (114 aa)) are a coiled coil. The tract at residues 228 to 277 (AEAEAENLPDDKPQQPTRPQEQSTGDTMGRDPGVSFKAVGLQPAGDVNLP) is disordered. The span at 241–253 (QQPTRPQEQSTGD) shows a compositional bias: polar residues.

In terms of assembly, component of the KNL1 complex composed of KNL1 and ZWINT. Part of the ten-subunit outer kinetochore KMN network that includes the KNL1, MIS12 and NDC80 complexes; a bioriented kinetochore contains approximately 150 copies of the network. Interacts with the MIS12 complex subunits MIS12 DSN1, and PMF1. Interacts with the NDC80 complex subunit NDC80 during mitosis. Interacts with ZW10. Interacts with CETN3.

It localises to the nucleus. The protein localises to the chromosome. Its subcellular location is the centromere. It is found in the kinetochore. Acts as a component of the outer kinetochore KNL1 complex that serves as a docking point for spindle assembly checkpoint components and mediates microtubule-kinetochore interactions. Kinetochores, consisting of a centromere-associated inner segment and a microtubule-contacting outer segment, play a crucial role in chromosome segregation by mediating the physical connection between centromeric DNA and spindle microtubules. The outer kinetochore is made up of the ten-subunit KMN network, comprising the MIS12, NDC80 and KNL1 complexes, and auxiliary microtubule-associated components; together they connect the outer kinetochore with the inner kinetochore, bind microtubules, and mediate interactions with mitotic checkpoint proteins that delay anaphase until chromosomes are bioriented on the spindle. Targets the RZZ complex to the kinetochore at prometaphase. Recruits MAD2L1 to the kinetochore, but is not required for BUB1B localization. In addition to orienting mitotic chromosomes, it is also essential for alignment of homologous chromosomes during meiotic metaphase I. In meiosis I, required to activate the spindle assembly checkpoint at unattached kinetochores to correct erroneous kinetochore-microtubule attachments. The polypeptide is Outer kinetochore KNL1 complex subunit ZWINT (ZWINT) (Homo sapiens (Human)).